We begin with the raw amino-acid sequence, 420 residues long: Tol-Pal system protein TolB (420 aa).

The first 21 residues, 1–21 (MKLFVHLVLFISLFIPYFTKA), serve as a signal peptide directing secretion.

The protein belongs to the TolB family. The Tol-Pal system is composed of five core proteins: the inner membrane proteins TolA, TolQ and TolR, the periplasmic protein TolB and the outer membrane protein Pal. They form a network linking the inner and outer membranes and the peptidoglycan layer.

It is found in the periplasm. Part of the Tol-Pal system, which plays a role in outer membrane invagination during cell division and is important for maintaining outer membrane integrity. In Wolbachia sp. subsp. Drosophila simulans (strain wRi), this protein is Tol-Pal system protein TolB.